The sequence spans 218 residues: Small ribosomal subunit protein uS3c (218 aa).

The KH type-2 domain maps to 47 to 118; the sequence is VRKHIKSSSN…KLRMALTEVE (72 aa).

This sequence belongs to the universal ribosomal protein uS3 family. As to quaternary structure, part of the 30S ribosomal subunit.

Its subcellular location is the plastid. It is found in the chloroplast. This chain is Small ribosomal subunit protein uS3c (rps3), found in Anthoceros angustus (Hornwort).